The primary structure comprises 241 residues: Spiralin (241 aa).

The N-terminal stretch at M1–A23 is a signal peptide. C24 carries the N-palmitoyl cysteine lipid modification. C24 is lipidated: S-diacylglycerol cysteine.

The protein belongs to the spiralin family. As to quaternary structure, seems to occur as dimer, tetramers, and large oligomers of identical chains. Post-translationally, palmitate and stearate are the major lipid components.

The protein localises to the cell membrane. Its function is as follows. Major membrane protein of spiroplasma. The protein is Spiralin (spi) of Spiroplasma citri.